A 266-amino-acid chain; its full sequence is Putative carbamate hydrolase RutD (266 aa).

This sequence belongs to the AB hydrolase superfamily. Hydrolase RutD family.

The enzyme catalyses carbamate + 2 H(+) = NH4(+) + CO2. Its function is as follows. Involved in pyrimidine catabolism. May facilitate the hydrolysis of carbamate, a reaction that can also occur spontaneously. The chain is Putative carbamate hydrolase RutD from Escherichia coli O127:H6 (strain E2348/69 / EPEC).